An 85-amino-acid chain; its full sequence is Large ribosomal subunit protein bL27 (85 aa).

A disordered region spans residues 1–21 (MAHKKAGGSSRNGRDSEAKRL).

It belongs to the bacterial ribosomal protein bL27 family.

The chain is Large ribosomal subunit protein bL27 from Aeromonas hydrophila subsp. hydrophila (strain ATCC 7966 / DSM 30187 / BCRC 13018 / CCUG 14551 / JCM 1027 / KCTC 2358 / NCIMB 9240 / NCTC 8049).